The primary structure comprises 840 residues: Homeobox-leucine zipper protein HOX9 (840 aa).

Disordered regions lie at residues 1–26 (MAAA…AGMD) and 135–160 (NPSL…DASN). Positions 12–21 (GSDGGGGGYD) are enriched in gly residues. Positions 26-89 (DSGKYVRYTP…NRRCRDKQRK (64 aa)) form a DNA-binding region, homeobox. Residues 86–135 (KQRKEASRLQAVNRKLTAMNKLLMEENERLQKQVSQLVHENAYMKQQLQN) are a coiled coil. Residues 157-385 (DASNPSGLLT…IAQETSGEVV (229 aa)) enclose the START domain.

It belongs to the HD-ZIP homeobox family. Class III subfamily. In terms of tissue distribution, expressed in seedlings, roots, stems, leaf sheaths and blades and panicles.

The protein resides in the nucleus. Its function is as follows. Probable transcription factor. The polypeptide is Homeobox-leucine zipper protein HOX9 (HOX9) (Oryza sativa subsp. indica (Rice)).